Here is a 738-residue protein sequence, read N- to C-terminus: Ent-kaurene synthase-like 1 (738 aa).

Mg(2+)-binding residues include Asp487, Asp491, Asn631, Asp632, and Glu639. Residues 487-491 (DDFFD) carry the DDXXD motif motif.

Belongs to the terpene synthase family. Mg(2+) is required as a cofactor.

It carries out the reaction ent-copalyl diphosphate = ent-kaur-16-ene + diphosphate. The protein operates within secondary metabolite biosynthesis; terpenoid biosynthesis. Functionally, diterpene cyclase involved in the biosynthesis of labdane-related diterpenoids (LRDs) natural products. Catalyzes the cyclization of ent-CDP into ent-kaurene. The chain is Ent-kaurene synthase-like 1 from Ricinus communis (Castor bean).